The chain runs to 358 residues: Probable branched-chain-amino-acid aminotransferase (358 aa).

K196 is modified (N6-(pyridoxal phosphate)lysine).

The protein belongs to the class-IV pyridoxal-phosphate-dependent aminotransferase family. Pyridoxal 5'-phosphate is required as a cofactor.

The enzyme catalyses L-leucine + 2-oxoglutarate = 4-methyl-2-oxopentanoate + L-glutamate. It carries out the reaction L-isoleucine + 2-oxoglutarate = (S)-3-methyl-2-oxopentanoate + L-glutamate. The catalysed reaction is L-valine + 2-oxoglutarate = 3-methyl-2-oxobutanoate + L-glutamate. It participates in amino-acid biosynthesis; L-isoleucine biosynthesis; L-isoleucine from 2-oxobutanoate: step 4/4. Its pathway is amino-acid biosynthesis; L-leucine biosynthesis; L-leucine from 3-methyl-2-oxobutanoate: step 4/4. It functions in the pathway amino-acid biosynthesis; L-valine biosynthesis; L-valine from pyruvate: step 4/4. Its function is as follows. Acts on leucine, isoleucine and valine. The protein is Probable branched-chain-amino-acid aminotransferase (ilvE) of Staphylococcus epidermidis (strain ATCC 12228 / FDA PCI 1200).